We begin with the raw amino-acid sequence, 720 residues long: Pollen receptor-like kinase 1 (720 aa).

The LRR 1; degenerate repeat unit spans residues 40-64 (LCSRGHLLIIFLLLVSPFNDAAVDV). Residues 123–146 (LGVLCYEGDVWGLQLENLDLSGVI) form an LRR 2; degenerate repeat. LRR repeat units follow at residues 154-179 (LHFL…SLEP), 226-248 (LPQV…HFPP), and 249-273 (NVLK…SLMD). Residues 288 to 319 (LESACNSPSQEANNPDSRNSSTISGQSSTDVI) form a disordered region. Polar residues predominate over residues 291–317 (ACNSPSQEANNPDSRNSSTISGQSSTD). Residues 330–350 (MLIVAVCLVVLCLLIVLILII) traverse the membrane as a helical segment. Polar residues-rich tracts occupy residues 356-382 (SSSQ…TSSA) and 389-405 (LSGN…NSNK). A disordered region spans residues 356–409 (SSSQNPQPVESNYSNNDRDQNAFTSSAPDDHVTLSGNSTYSNNQHSNSNKAEAP). Residues 434 to 702 (RASAEVLGSG…KEVVQSIQSL (269 aa)) form the Protein kinase domain. Residues 440 to 448 (LGSGNLGSS) and Lys-462 contribute to the ATP site.

It belongs to the protein kinase superfamily. In terms of assembly, interacts with KIP1. Autophosphorylated. Expressed in mature pollen grains and pollen tubes, but not in style, petal, leaf, root or sepal. Very low expression in the ovary.

It localises to the microsome membrane. The protein resides in the cytoplasm. It carries out the reaction L-seryl-[protein] + ATP = O-phospho-L-seryl-[protein] + ADP + H(+). The enzyme catalyses L-threonyl-[protein] + ATP = O-phospho-L-threonyl-[protein] + ADP + H(+). The catalysed reaction is L-tyrosyl-[protein] + ATP = O-phospho-L-tyrosyl-[protein] + ADP + H(+). Its function is as follows. Dual-specificity kinase with both serine/threonine and tyrosine kinase activities. Required for postmeiotic development of microspores. Involved in embryo sac development at the late stages of megagametogenesis. Involved in the phosphorylation of KIP1. The protein is Pollen receptor-like kinase 1 of Petunia integrifolia (Violet-flowered petunia).